We begin with the raw amino-acid sequence, 407 residues long: Ran GTPase-activating protein 1 (407 aa).

11 LRR repeats span residues 11 to 39 (EEEQ…EELA), 40 to 67 (ALKT…KCIA), 68 to 101 (ENTQ…KFLL), 102 to 133 (PVLL…DYIA), 134 to 166 (HAVN…LAQN), 167 to 197 (KKAA…ALGL), 198 to 226 (KSHS…IHYG), 227 to 256 (LQYL…KALP), 257 to 285 (TWKD…KVFT), 286 to 315 (EVKF…LPAM), and 316 to 346 (EKGN…LQSK). The segment at 353–378 (DDFEEVDSEDEEGEDEEDEDEDEKLE) is disordered. Position 360 is a phosphoserine (serine 360).

This sequence belongs to the RNA1 family.

It is found in the cytoplasm. Its function is as follows. GTPase activator for the nuclear Ras-related regulatory protein GSP1 (Ran), converting it to the putatively inactive GDP-bound state. The protein is Ran GTPase-activating protein 1 (RNA1) of Saccharomyces cerevisiae (strain ATCC 204508 / S288c) (Baker's yeast).